Here is a 292-residue protein sequence, read N- to C-terminus: Elongation factor Ts (292 aa).

The segment at 79 to 82 (TDFV) is involved in Mg(2+) ion dislocation from EF-Tu.

It belongs to the EF-Ts family.

It is found in the cytoplasm. Associates with the EF-Tu.GDP complex and induces the exchange of GDP to GTP. It remains bound to the aminoacyl-tRNA.EF-Tu.GTP complex up to the GTP hydrolysis stage on the ribosome. In Xanthomonas oryzae pv. oryzae (strain MAFF 311018), this protein is Elongation factor Ts.